A 212-amino-acid chain; its full sequence is UPF0111 protein PH1389 (212 aa).

Belongs to the UPF0111 family.

This Pyrococcus horikoshii (strain ATCC 700860 / DSM 12428 / JCM 9974 / NBRC 100139 / OT-3) protein is UPF0111 protein PH1389.